The sequence spans 371 residues: Cytochrome b (371 aa).

4 helical membrane passes run 25 to 45, 69 to 90, 105 to 125, and 170 to 190; these read FGSM…FLAV, WMMQ…YIHI, WMSG…GYVL, and FFAL…LHII. H75 and H89 together coordinate heme b. Heme b-binding residues include H174 and H188. Residue H193 participates in a ubiquinone binding. 4 helical membrane-spanning segments follow: residues 218-238, 280-300, 312-332, and 339-358; these read HKDL…VSFF, LGGA…PFTH, FSQL…WAAT, and FIVI…LLIP.

The protein belongs to the cytochrome b family. In terms of assembly, the cytochrome bc1 complex contains 3 respiratory subunits (MT-CYB, CYC1 and UQCRFS1), 2 core proteins (UQCRC1 and UQCRC2) and probably 6 low-molecular weight proteins. The cofactor is heme b.

It is found in the mitochondrion inner membrane. Functionally, component of the ubiquinol-cytochrome c reductase complex (complex III or cytochrome b-c1 complex) that is part of the mitochondrial respiratory chain. The b-c1 complex mediates electron transfer from ubiquinol to cytochrome c. Contributes to the generation of a proton gradient across the mitochondrial membrane that is then used for ATP synthesis. The polypeptide is Cytochrome b (MT-CYB) (Leiopython albertisii (Northern white-lipped python)).